Reading from the N-terminus, the 190-residue chain is 6,7-dimethyl-8-ribityllumazine synthase (190 aa).

Residues Phe-23, 61-63 (SFE), and 85-87 (AVI) each bind 5-amino-6-(D-ribitylamino)uracil. 90–91 (QT) is a (2S)-2-hydroxy-3-oxobutyl phosphate binding site. The Proton donor role is filled by His-93. Phe-118 is a binding site for 5-amino-6-(D-ribitylamino)uracil. Position 132 (Arg-132) interacts with (2S)-2-hydroxy-3-oxobutyl phosphate.

Belongs to the DMRL synthase family.

The catalysed reaction is (2S)-2-hydroxy-3-oxobutyl phosphate + 5-amino-6-(D-ribitylamino)uracil = 6,7-dimethyl-8-(1-D-ribityl)lumazine + phosphate + 2 H2O + H(+). It participates in cofactor biosynthesis; riboflavin biosynthesis; riboflavin from 2-hydroxy-3-oxobutyl phosphate and 5-amino-6-(D-ribitylamino)uracil: step 1/2. In terms of biological role, catalyzes the formation of 6,7-dimethyl-8-ribityllumazine by condensation of 5-amino-6-(D-ribitylamino)uracil with 3,4-dihydroxy-2-butanone 4-phosphate. This is the penultimate step in the biosynthesis of riboflavin. The polypeptide is 6,7-dimethyl-8-ribityllumazine synthase (Nostoc sp. (strain PCC 7120 / SAG 25.82 / UTEX 2576)).